Consider the following 266-residue polypeptide: Signal peptidase I (266 aa).

Residues Met-1–Ser-20 are Cytoplasmic-facing. Residues Phe-21–Val-41 traverse the membrane as a helical segment. At Pro-42 to Ala-266 the chain is on the extracellular side. Catalysis depends on residues Ser-45 and Lys-108.

This sequence belongs to the peptidase S26 family.

It is found in the cell membrane. The enzyme catalyses Cleavage of hydrophobic, N-terminal signal or leader sequences from secreted and periplasmic proteins.. This is Signal peptidase I (lepB) from Rickettsia conorii (strain ATCC VR-613 / Malish 7).